The primary structure comprises 77 residues: Putative sulfur carrier protein YedF (77 aa).

Residue Cys17 is the Cysteine persulfide intermediate of the active site.

The protein belongs to the sulfur carrier protein TusA family.

In Escherichia coli O157:H7, this protein is Putative sulfur carrier protein YedF (yedF).